We begin with the raw amino-acid sequence, 473 residues long: Probable DNA N(6)-methyladenine demethylase ALKBH1B (473 aa).

357–359 (NFY) contacts 2-oxoglutarate. Positions 368, 391, and 449 each coordinate Fe cation. 461–465 (RLFFR) contacts 2-oxoglutarate.

This sequence belongs to the alkB family. Requires Fe(2+) as cofactor. In terms of tissue distribution, undetectable.

The enzyme catalyses an N(6)-methyl-2'-deoxyadenosine in DNA + 2-oxoglutarate + O2 = a 2'-deoxyadenosine in DNA + formaldehyde + succinate + CO2. Functionally, dioxygenase that may catalyzes DNA N(6)-methyladenine (6 mA) demethylation. Requires molecular oxygen, alpha-ketoglutarate and iron. In Arabidopsis thaliana (Mouse-ear cress), this protein is Probable DNA N(6)-methyladenine demethylase ALKBH1B.